The chain runs to 537 residues: MGKNEKTSLGRALVKHHNHMIQETKEKGKSYKDQHKKVLESVTEVSDIDAIIEQAEEAERLFAIHHDSATPVPINMDTGSSSSGITAKEWKEQRMREEALHASSLQVPRRPHWTPKMNVEKLDANEKQAFLTWRRKLASLEENEKLVLTPFEKNLDIWRQLWRVLERSDLIVMVVDARDPLFYRCPDLEAYAQEIDEHKKTMLLVNKADLLPSYVREKWAEYFSRNNILFVFWSAKAATATLEGKPLKEQWRAPDTTQKTDNPAVKVYGRDDLLDRLKLEALEIVKMRKSRGVSATSTESHCEQVVVGFVGYPNVGKSSTINALVGQKRTGVTSTPGKTKHFQTLIISEDLMLCDCPGLVFPSFSSSRYEMVASGVLPIDRMTEHLEAIKVVAELVPRHAIEDVYNISLPKPKSYEPQSRPPLASELLRTYCLSRGYVASSGLPDETRAARQILKDYIEGKLPHFAMPPEITRDDENETADDTLGAETREGSQTEKKGEEAPSLGLDQVLDDLSSFDLANGLVSSKTKQHKKSHRKQ.

The CP-type G domain maps to 158–362 (WRQLWRVLER…LCDCPGLVFP (205 aa)). The DARXP motif signature appears at 176–180 (DARDP). The interval 206-209 (NKAD) is G4. 206-209 (NKAD) contributes to the GTP binding site. The segment at 234–236 (SAK) is G5. Residues 311 to 318 (GYPNVGKS) are G1. Position 314–319 (314–319 (NVGKSS)) interacts with GTP. The segment at 337–341 (GKTKH) is G2. The interval 355–358 (DCPG) is G3. G358 is a binding site for GTP. The segment at 484–508 (LGAETREGSQTEKKGEEAPSLGLDQ) is disordered. The span at 487 to 500 (ETREGSQTEKKGEE) shows a compositional bias: basic and acidic residues.

The protein belongs to the TRAFAC class YlqF/YawG GTPase family. Ubiquitous, with the highest expression in stem and hypsophyll on day 66.

It localises to the cytoplasm. In terms of biological role, GTPase that might be redundant with LSG1-2 for ribosome biogenesis. Binds to 23S rRNA. The sequence is that of GTPase LSG1-1 from Arabidopsis thaliana (Mouse-ear cress).